The following is an 88-amino-acid chain: Small ribosomal subunit protein bS20 (88 aa).

Positions 1–27 (MANSKSAKKRALQSEKRRQHNASRRSM) are disordered.

This sequence belongs to the bacterial ribosomal protein bS20 family.

Its function is as follows. Binds directly to 16S ribosomal RNA. The polypeptide is Small ribosomal subunit protein bS20 (Shewanella baltica (strain OS223)).